The chain runs to 157 residues: uncharacterized protein (157 aa).

It to E.coli YcjD and H.influenzae HI_0925.

This is an uncharacterized protein from Haemophilus influenzae (strain ATCC 51907 / DSM 11121 / KW20 / Rd).